The primary structure comprises 115 residues: Nucleoid-associated protein PMN2A_1347 (115 aa).

The disordered stretch occupies residues 89-115; it reads STSTMKERMEDLTGGFKLNLPGMGEEN.

Belongs to the YbaB/EbfC family. In terms of assembly, homodimer.

It localises to the cytoplasm. It is found in the nucleoid. Binds to DNA and alters its conformation. May be involved in regulation of gene expression, nucleoid organization and DNA protection. The sequence is that of Nucleoid-associated protein PMN2A_1347 from Prochlorococcus marinus (strain NATL2A).